A 380-amino-acid polypeptide reads, in one-letter code: UPF0754 membrane protein Bsph_0374 (380 aa).

2 helical membrane-spanning segments follow: residues 1-21 and 357-377; these read MDNFIVTLLFMAIIGAAIGGV and MITVLGAVLGGLIGIVQGLIV.

The protein belongs to the UPF0754 family.

Its subcellular location is the cell membrane. This is UPF0754 membrane protein Bsph_0374 from Lysinibacillus sphaericus (strain C3-41).